The sequence spans 114 residues: Putative membrane protein insertion efficiency factor (114 aa).

This sequence belongs to the UPF0161 family.

The protein resides in the cell inner membrane. Functionally, could be involved in insertion of integral membrane proteins into the membrane. The protein is Putative membrane protein insertion efficiency factor of Wolinella succinogenes (strain ATCC 29543 / DSM 1740 / CCUG 13145 / JCM 31913 / LMG 7466 / NCTC 11488 / FDC 602W) (Vibrio succinogenes).